The sequence spans 556 residues: PPE family protein PPE2 (556 aa).

The PPE stretch occupies residues 8–164 (ASPPEVHSAL…ASYQAVSTAA (157 aa)). An SH3-like region spans residues 201-256 (QKIGYTDFYNNVIQPFINWLTNLPFLQAMFSGFDPWLPSLGNPLTFLSPANIAFAL). Residues 319–340 (LEQTLALLPAALPLLAAPLAPL) form a leucine zipper motif region. 2 disordered regions span residues 385–418 (TPTP…PPVT) and 443–556 (GTGV…TRVE). A compositionally biased stretch (pro residues) spans 400–417 (PTPPLGPPPPPVTAPPPV). The span at 456–471 (AEAPASAAAPEEQVQP) shows a compositional bias: low complexity. Over residues 472-481 (QRRRRPKIKQ) the composition is skewed to basic residues. Positions 473–481 (RRRRPKIKQ) match the Nuclear localization signal motif.

Belongs to the mycobacterial PPE family.

It localises to the secreted. It is found in the host cytoplasm. The protein resides in the host nucleus. Inhibits nitric oxide (NO) production in activated macrophages. Acts by inhibiting expression of the host inducible nitric oxide synthase (iNOS). PPE2 is translocated into the host macrophage nucleus, where it interacts with a GATA-binding site overlapping with the TATA box of NOS2 (iNOS) promoter, and strongly inhibits NOS2 gene transcription. Reduction in NO production in turn facilitates intracellular survival of the bacilli inside the macrophage. In addition, disrupts the assembly of NADPH oxidase complex, which inhibits NADPH oxidase-mediated reactive oxygen species (ROS) generation in macrophages and favors M.tuberculosis survival. Acts by interacting with NCF2, the cytosolic subunit of NADPH oxidase, and preventing translocation of NCF2 and NCF1 to the membrane, which causes a reduction of the functional assembly of NADPH oxidase complex and a decrease in NADPH oxidase activity. In Mycobacterium tuberculosis (strain CDC 1551 / Oshkosh), this protein is PPE family protein PPE2 (PPE2).